A 694-amino-acid polypeptide reads, in one-letter code: Elongation factor G (694 aa).

One can recognise a tr-type G domain in the interval 8–287; it reads EDYRNFGIMA…AVVEFLPAPT (280 aa). Residues 17-24, 86-90, and 140-143 contribute to the GTP site; these read AHIDAGKT, DTPGH, and NKMD.

It belongs to the TRAFAC class translation factor GTPase superfamily. Classic translation factor GTPase family. EF-G/EF-2 subfamily.

The protein localises to the cytoplasm. Functionally, catalyzes the GTP-dependent ribosomal translocation step during translation elongation. During this step, the ribosome changes from the pre-translocational (PRE) to the post-translocational (POST) state as the newly formed A-site-bound peptidyl-tRNA and P-site-bound deacylated tRNA move to the P and E sites, respectively. Catalyzes the coordinated movement of the two tRNA molecules, the mRNA and conformational changes in the ribosome. The polypeptide is Elongation factor G (Brucella suis (strain ATCC 23445 / NCTC 10510)).